Reading from the N-terminus, the 221-residue chain is Pyridoxine/pyridoxamine 5'-phosphate oxidase (221 aa).

Substrate-binding positions include Arg14–Tyr17 and Lys73. FMN is bound by residues Arg68 to Lys73, Phe83 to Thr84, Lys90, and Gln112. Residues Tyr130, Arg134, and Ser138 each coordinate substrate. Residues Gln147–Ser148 and Trp193 contribute to the FMN site. Arg199–His201 contacts substrate. Residue Arg203 participates in FMN binding.

It belongs to the pyridoxamine 5'-phosphate oxidase family. Homodimer. It depends on FMN as a cofactor.

The enzyme catalyses pyridoxamine 5'-phosphate + O2 + H2O = pyridoxal 5'-phosphate + H2O2 + NH4(+). The catalysed reaction is pyridoxine 5'-phosphate + O2 = pyridoxal 5'-phosphate + H2O2. It functions in the pathway cofactor metabolism; pyridoxal 5'-phosphate salvage; pyridoxal 5'-phosphate from pyridoxamine 5'-phosphate: step 1/1. The protein operates within cofactor metabolism; pyridoxal 5'-phosphate salvage; pyridoxal 5'-phosphate from pyridoxine 5'-phosphate: step 1/1. Functionally, catalyzes the oxidation of either pyridoxine 5'-phosphate (PNP) or pyridoxamine 5'-phosphate (PMP) into pyridoxal 5'-phosphate (PLP). In Salinispora arenicola (strain CNS-205), this protein is Pyridoxine/pyridoxamine 5'-phosphate oxidase.